We begin with the raw amino-acid sequence, 312 residues long: Protein-methionine-sulfoxide reductase catalytic subunit MsrP (312 aa).

The segment at residues 1–47 (MLIRRPPDLLPSEITPEPLARGRRALLKGLGAGAALAGLGLPQISQA) is a signal peptide (tat-type signal). Mo-molybdopterin-binding positions include N74, 77–78 (YE), C133, T168, N216, R221, and 232–234 (SAK).

This sequence belongs to the MsrP family. In terms of assembly, heterodimer of a catalytic subunit (MsrP) and a heme-binding subunit (MsrQ). Mo-molybdopterin serves as cofactor. In terms of processing, predicted to be exported by the Tat system. The position of the signal peptide cleavage has not been experimentally proven.

Its subcellular location is the periplasm. The enzyme catalyses L-methionyl-[protein] + a quinone + H2O = L-methionyl-(R)-S-oxide-[protein] + a quinol. In terms of biological role, part of the MsrPQ system that repairs oxidized periplasmic proteins containing methionine sulfoxide residues (Met-O), using respiratory chain electrons. Thus protects these proteins from oxidative-stress damage caused by reactive species of oxygen and chlorine generated by the host defense mechanisms. MsrPQ is essential for the maintenance of envelope integrity under bleach stress, rescuing a wide series of structurally unrelated periplasmic proteins from methionine oxidation. The catalytic subunit MsrP is non-stereospecific, being able to reduce both (R-) and (S-) diastereoisomers of methionine sulfoxide. Involved in protection against reactive chlorine species (RCS) generated by chlorite and hypochlorite. The polypeptide is Protein-methionine-sulfoxide reductase catalytic subunit MsrP (Azospira oryzae (strain ATCC BAA-33 / DSM 13638 / PS) (Dechlorosoma suillum)).